We begin with the raw amino-acid sequence, 332 residues long: MMKKTVVIGLAVVVLAAVVAGGYWWYQSRQDNGLTLYGNVDIRTVNLSFRVGGRVESLAVDEGDAIKAGQVLGELDHKPYEIALMQAKAGVSVAQAQYDLMLAGYRDEEIAQAAAAVKQAQAAYDYAQNFYNRQQGLWKSRTISANDLENARSSRDQAQATLKSAQDKLRQYRSGNREQDIAQAKASLEQAQAQLAQAELNLQDSTLIAPSDGTLLTRAVEPGTVLNEGGTVFTVSLTRPVWVRAYVDERNLDQAQPGRKVLLYTDGRPDKPYHGQIGFVSPTAEFTPKTVETPDLRTDLVYRLRIVVTDADDALRQGMPVTVQFGDEAGHE.

Residues 1–16 (MMKKTVVIGLAVVVLA) form the signal peptide. Residues 108–209 (EEIAQAAAAV…LNLQDSTLIA (102 aa)) are a coiled coil.

It belongs to the UPF0194 family.

It localises to the periplasm. This Shigella dysenteriae serotype 1 (strain Sd197) protein is UPF0194 membrane protein YbhG.